Consider the following 428-residue polypeptide: Glutamate-1-semialdehyde 2,1-aminomutase 1 (428 aa).

Lys-268 is subject to N6-(pyridoxal phosphate)lysine.

Belongs to the class-III pyridoxal-phosphate-dependent aminotransferase family. HemL subfamily. In terms of assembly, homodimer. The cofactor is pyridoxal 5'-phosphate.

Its subcellular location is the cytoplasm. The catalysed reaction is (S)-4-amino-5-oxopentanoate = 5-aminolevulinate. Its pathway is porphyrin-containing compound metabolism; protoporphyrin-IX biosynthesis; 5-aminolevulinate from L-glutamyl-tRNA(Glu): step 2/2. The sequence is that of Glutamate-1-semialdehyde 2,1-aminomutase 1 from Geobacillus thermodenitrificans (strain NG80-2).